Here is a 347-residue protein sequence, read N- to C-terminus: Monopolin complex subunit LRS4 (347 aa).

Positions 46–118 (KKVVDETLFL…QISVDKHNKE (73 aa)) form a coiled coil. Residues 112–130 (VDKHNKERTPSTGRDEQQR) show a composition bias toward basic and acidic residues. Disordered regions lie at residues 112–183 (VDKH…SLLS) and 208–230 (RNDT…LQKS). 2 stretches are compositionally biased toward polar residues: residues 131–140 (NSKAAHTSKP) and 155–172 (NNQT…PTSQ). 2 positions are modified to phosphoserine: Ser-168 and Ser-230.

As to quaternary structure, component of the monopolin complex composed of at least CSM1, LRS4 and MAM1. The complex associates with the kinetochore. Post-translationally, phosphorylated by CDC5. This phosphorylation is required for the location to the kinetochores during late pachytene.

The protein resides in the nucleus. The protein localises to the nucleolus. It is found in the chromosome. It localises to the centromere. Functionally, component of the monopolin complex which promotes monoorientation during meiosis I, required for chromosome segregation during meiosis. Involved in rDNA silencing. The chain is Monopolin complex subunit LRS4 (LRS4) from Saccharomyces cerevisiae (strain ATCC 204508 / S288c) (Baker's yeast).